The chain runs to 255 residues: Triosephosphate isomerase (255 aa).

Asn-10–Lys-12 is a binding site for substrate. His-96 acts as the Electrophile in catalysis. Glu-168 functions as the Proton acceptor in the catalytic mechanism. Substrate contacts are provided by residues Gly-174, Ser-213, and Gly-234–Gly-235.

Belongs to the triosephosphate isomerase family. As to quaternary structure, homodimer.

It localises to the cytoplasm. The catalysed reaction is D-glyceraldehyde 3-phosphate = dihydroxyacetone phosphate. It participates in carbohydrate biosynthesis; gluconeogenesis. Its pathway is carbohydrate degradation; glycolysis; D-glyceraldehyde 3-phosphate from glycerone phosphate: step 1/1. Functionally, involved in the gluconeogenesis. Catalyzes stereospecifically the conversion of dihydroxyacetone phosphate (DHAP) to D-glyceraldehyde-3-phosphate (G3P). The chain is Triosephosphate isomerase from Histophilus somni (strain 2336) (Haemophilus somnus).